The primary structure comprises 349 residues: Isopentenyl-diphosphate delta-isomerase (349 aa).

A substrate-binding site is contributed by 6-7 (RK). Residues 62-64 (AMT), serine 93, and asparagine 122 contribute to the FMN site. Glutamine 152 contributes to the substrate binding site. Residue glutamate 153 participates in Mg(2+) binding. FMN is bound by residues lysine 184, threonine 214, 258 to 259 (GG), and 280 to 281 (AG).

It belongs to the IPP isomerase type 2 family. In terms of assembly, homooctamer. Dimer of tetramers. FMN serves as cofactor. The cofactor is NADPH. Mg(2+) is required as a cofactor.

The protein localises to the cytoplasm. The catalysed reaction is isopentenyl diphosphate = dimethylallyl diphosphate. Functionally, involved in the biosynthesis of isoprenoids. Catalyzes the 1,3-allylic rearrangement of the homoallylic substrate isopentenyl (IPP) to its allylic isomer, dimethylallyl diphosphate (DMAPP). The protein is Isopentenyl-diphosphate delta-isomerase of Bacillus subtilis (strain 168).